A 239-amino-acid polypeptide reads, in one-letter code: Major prion protein (239 aa).

Residues 1-15 (MLVLFVATWSDLGLC) form the signal peptide. Residues 15-98 (CKKRPKPGGW…NQWNKPSKPK (84 aa)) form a disordered region. The interaction with ADGRG6 stretch occupies residues 16-31 (KKRPKPGGWNTGGSRY). Positions 16 to 222 (KKRPKPGGWN…ESQAYYQRGS (207 aa)) are interaction with GRB2, ERI3 and SYN1. A run of 5 repeats spans residues 44-51 (PQSGGWGQ), 52-59 (PHGGGWGQ), 60-67 (PHGGGWGQ), 68-75 (PHGGGWGQ), and 76-83 (PHGGGWGQ). The interval 44 to 83 (PQSGGWGQPHGGGWGQPHGGGWGQPHGGGWGQPHGGGWGQ) is 5 X 8 AA tandem repeats of P-H-G-G-G-W-G-Q. Positions 47–87 (GGWGQPHGGGWGQPHGGGWGQPHGGGWGQPHGGGWGQGGGT) are enriched in gly residues. H53, G54, G55, H61, G62, G63, H69, G70, G71, H77, G78, and G79 together coordinate Cu(2+). The cysteines at positions 171 and 206 are disulfide-linked. N173 and N189 each carry an N-linked (GlcNAc...) asparagine glycan. S222 carries the GPI-anchor amidated serine lipid modification. A propeptide spans 223–239 (SMVLFSSPPVILLISFL) (removed in mature form).

Belongs to the prion family. As to quaternary structure, monomer and homodimer. Has a tendency to aggregate into amyloid fibrils containing a cross-beta spine, formed by a steric zipper of superposed beta-strands. Soluble oligomers may represent an intermediate stage on the path to fibril formation. Copper binding may promote oligomerization. Interacts with GRB2, APP, ERI3/PRNPIP and SYN1. Mislocalized cytosolically exposed PrP interacts with MGRN1; this interaction alters MGRN1 subcellular location and causes lysosomal enlargement. Interacts with APP. Interacts with KIAA1191. Interacts with ADGRG6.

The protein localises to the cell membrane. It is found in the golgi apparatus. Its function is as follows. Its primary physiological function is unclear. May play a role in neuronal development and synaptic plasticity. May be required for neuronal myelin sheath maintenance. May promote myelin homeostasis through acting as an agonist for ADGRG6 receptor. May play a role in iron uptake and iron homeostasis. Soluble oligomers are toxic to cultured neuroblastoma cells and induce apoptosis (in vitro). Association with GPC1 (via its heparan sulfate chains) targets PRNP to lipid rafts. Also provides Cu(2+) or Zn(2+) for the ascorbate-mediated GPC1 deaminase degradation of its heparan sulfate side chains. The protein is Major prion protein (PRNP) of Aotus trivirgatus (Three-striped night monkey).